An 84-amino-acid chain; its full sequence is Large ribosomal subunit protein bL27 (84 aa).

Residues 1–21 are disordered; that stretch reads MATKKAGGSSRNGRDSAGRRL.

The protein belongs to the bacterial ribosomal protein bL27 family.

In Pelagibacter ubique (strain HTCC1062), this protein is Large ribosomal subunit protein bL27.